A 275-amino-acid polypeptide reads, in one-letter code: NH(3)-dependent NAD(+) synthetase (275 aa).

46–53 contacts ATP; the sequence is GISGGQDS. Residue Asp-52 participates in Mg(2+) binding. Arg-140 contacts deamido-NAD(+). Position 160 (Thr-160) interacts with ATP. Residue Glu-165 participates in Mg(2+) binding. Residues Lys-173 and Asp-180 each contribute to the deamido-NAD(+) site. Positions 189 and 211 each coordinate ATP. 260 to 261 contacts deamido-NAD(+); that stretch reads HK.

It belongs to the NAD synthetase family. Homodimer.

It carries out the reaction deamido-NAD(+) + NH4(+) + ATP = AMP + diphosphate + NAD(+) + H(+). It functions in the pathway cofactor biosynthesis; NAD(+) biosynthesis; NAD(+) from deamido-NAD(+) (ammonia route): step 1/1. In terms of biological role, catalyzes the ATP-dependent amidation of deamido-NAD to form NAD. Uses ammonia as a nitrogen source. The chain is NH(3)-dependent NAD(+) synthetase from Erwinia tasmaniensis (strain DSM 17950 / CFBP 7177 / CIP 109463 / NCPPB 4357 / Et1/99).